Consider the following 450-residue polypeptide: tRNA modification GTPase MnmE (450 aa).

The (6S)-5-formyl-5,6,7,8-tetrahydrofolate site is built by Arg-23, Glu-79, and Lys-118. Residues 214-374 enclose the TrmE-type G domain; that stretch reads GITLILVGKP…LKEHILNKVG (161 aa). Position 224 (Asn-224) interacts with K(+). GTP contacts are provided by residues 224 to 229, 243 to 249, and 268 to 271; these read NAGKSS, TSIAGTT, and DTAG. Ser-228 contributes to the Mg(2+) binding site. The K(+) site is built by Thr-243, Ile-245, and Thr-248. A Mg(2+)-binding site is contributed by Thr-249. Lys-450 lines the (6S)-5-formyl-5,6,7,8-tetrahydrofolate pocket.

It belongs to the TRAFAC class TrmE-Era-EngA-EngB-Septin-like GTPase superfamily. TrmE GTPase family. In terms of assembly, homodimer. Heterotetramer of two MnmE and two MnmG subunits. K(+) serves as cofactor.

The protein localises to the cytoplasm. Exhibits a very high intrinsic GTPase hydrolysis rate. Involved in the addition of a carboxymethylaminomethyl (cmnm) group at the wobble position (U34) of certain tRNAs, forming tRNA-cmnm(5)s(2)U34. This is tRNA modification GTPase MnmE from Francisella tularensis subsp. holarctica (strain FTNF002-00 / FTA).